The sequence spans 192 residues: uncharacterized protein (192 aa).

The 132-residue stretch at His-29–Ser-160 folds into the Nudix hydrolase domain. Positions Gly-67 to Ala-89 match the Nudix box motif. Glu-83 and Glu-87 together coordinate Mg(2+).

The protein belongs to the Nudix hydrolase family. PCD1 subfamily. The cofactor is Mn(2+). Requires Mg(2+) as cofactor.

In terms of biological role, probably mediates the hydrolysis of some nucleoside diphosphate derivatives. This is an uncharacterized protein from Escherichia coli O139:H28 (strain E24377A / ETEC).